The chain runs to 105 residues: Blood plasma apolipoprotein LAL1 (105 aa).

An N-terminal signal peptide occupies residues 1–21; sequence MKLHVAALATLAVVCILAAGS. Residues 22 to 29 constitute a propeptide that is removed on maturation; it reads EAAPKAMS.

As to expression, plasma.

It localises to the secreted. The chain is Blood plasma apolipoprotein LAL1 from Petromyzon marinus (Sea lamprey).